A 506-amino-acid polypeptide reads, in one-letter code: Maturase K (506 aa).

Belongs to the intron maturase 2 family. MatK subfamily.

Its subcellular location is the plastid. The protein resides in the chloroplast. Usually encoded in the trnK tRNA gene intron. Probably assists in splicing its own and other chloroplast group II introns. The chain is Maturase K from Trifolium lupinaster (Lupine clover).